Here is a 360-residue protein sequence, read N- to C-terminus: Peptide chain release factor 1 (360 aa).

Q234 is subject to N5-methylglutamine.

The protein belongs to the prokaryotic/mitochondrial release factor family. In terms of processing, methylated by PrmC. Methylation increases the termination efficiency of RF1.

The protein localises to the cytoplasm. Peptide chain release factor 1 directs the termination of translation in response to the peptide chain termination codons UAG and UAA. The protein is Peptide chain release factor 1 of Clostridium perfringens (strain 13 / Type A).